We begin with the raw amino-acid sequence, 194 residues long: Imidazoleglycerol-phosphate dehydratase (194 aa).

This sequence belongs to the imidazoleglycerol-phosphate dehydratase family.

The protein resides in the cytoplasm. The catalysed reaction is D-erythro-1-(imidazol-4-yl)glycerol 3-phosphate = 3-(imidazol-4-yl)-2-oxopropyl phosphate + H2O. It functions in the pathway amino-acid biosynthesis; L-histidine biosynthesis; L-histidine from 5-phospho-alpha-D-ribose 1-diphosphate: step 6/9. The chain is Imidazoleglycerol-phosphate dehydratase from Bacillus cereus (strain G9842).